The sequence spans 313 residues: uncharacterized protein (313 aa).

Residues His-8, His-10, Glu-126, His-180, His-207, and Asp-262 each coordinate a divalent metal cation.

It belongs to the metallo-dependent hydrolases superfamily. TatD-type hydrolase family. A divalent metal cation serves as cofactor.

Its function is as follows. Putative deoxyribonuclease. This is an uncharacterized protein from Saccharomyces cerevisiae (strain ATCC 204508 / S288c) (Baker's yeast).